Reading from the N-terminus, the 195-residue chain is Myelin basic protein (195 aa).

Alanine 2 carries the post-translational modification N-acetylalanine. Serine 8 and serine 13 each carry phosphoserine. Tyrosine 15 carries the post-translational modification Phosphotyrosine. Threonine 18 is subject to Phosphothreonine. Serine 20 is modified (phosphoserine). Threonine 21 is modified (phosphothreonine). Citrulline occurs at positions 26 and 32. Phosphothreonine is present on threonine 36. At serine 41 the chain carries Phosphoserine. Arginine 44 and arginine 50 each carry omega-N-methylarginine. The disordered stretch occupies residues 45 to 79 (FFSGDRGAPKRGSGKVPWLKQSRSPLPSHARSRPG). Serine 57 carries the phosphoserine modification. Threonine 92 is modified (phosphothreonine). Tyrosine 94 is modified (phosphotyrosine). Serine 101 carries the post-translational modification Phosphoserine. Phosphothreonine is present on residues threonine 104, threonine 119, and threonine 122. The disordered stretch occupies residues 117–139 (IVTPRTPPPSQGKGRGLSLSRFS). Position 127 is a deamidated glutamine (glutamine 127). Omega-N-methylarginine; alternate is present on arginine 131. Arginine 131 bears the Symmetric dimethylarginine; alternate mark. Serine 139 is modified (phosphoserine). Residue lysine 146 is modified to N6-acetyllysine. Arginine 154 is modified (citrulline). A Deamidated glutamine modification is found at glutamine 172. Arginine 184 is subject to Citrulline. At serine 186 the chain carries Phosphoserine. Serine 190 is subject to Phosphoserine; by UHMK1. A Citrulline modification is found at arginine 195.

It belongs to the myelin basic protein family. In terms of assembly, homodimer. As in other animals, several charge isomers may be produced as a result of optional post-translational modifications, such as phosphorylation of serine or threonine residues, deamidation of glutamine or asparagine residues, citrullination and methylation of arginine residues. In terms of processing, arg-131 was found to be 44% monomethylated and 11% symmetrically dimethylated. Post-translationally, phosphorylated by TAOK2, VRK2, MAPK11, MAPK12, MAPK14 and MINK1. Proteolytically cleaved in B cell lysosomes by cathepsin CTSG which degrades the major immunogenic MBP epitope and prevents the activation of MBP-specific autoreactive T cells. As to expression, found in both the central and the peripheral nervous system.

It localises to the myelin membrane. Is, with PLP, the most abundant protein component of the myelin membrane in the CNS. Has a role in both the formation and stabilization of this compact multilayer arrangement of bilayers. Each splice variant and charge isomer may have a specialized function in the assembly of an optimized, biochemically functional myelin membrane. In Rattus norvegicus (Rat), this protein is Myelin basic protein (Mbp).